We begin with the raw amino-acid sequence, 129 residues long: Large ribosomal subunit protein bL20 (129 aa).

This sequence belongs to the bacterial ribosomal protein bL20 family.

Its function is as follows. Binds directly to 23S ribosomal RNA and is necessary for the in vitro assembly process of the 50S ribosomal subunit. It is not involved in the protein synthesizing functions of that subunit. The sequence is that of Large ribosomal subunit protein bL20 from Mycobacterium marinum (strain ATCC BAA-535 / M).